The primary structure comprises 121 residues: uncharacterized protein (121 aa).

This is an uncharacterized protein from Methanocaldococcus jannaschii (strain ATCC 43067 / DSM 2661 / JAL-1 / JCM 10045 / NBRC 100440) (Methanococcus jannaschii).